We begin with the raw amino-acid sequence, 116 residues long: Protein Rev (116 aa).

2 positions are modified to phosphoserine; by host CK2: Ser-5 and Ser-8. Residues 18-26 (LIKFLYQSN) form a homomultimerization region. The segment at 23–49 (YQSNPPPNPEGTRQARRNRRRRWRERQ) is disordered. Residues 34–50 (TRQARRNRRRRWRERQR) carry the Nuclear localization signal and RNA-binding (RRE) motif. Basic residues predominate over residues 36-47 (QARRNRRRRWRE). Residues 73–84 (LQLPPLERLTLD) carry the Nuclear export signal and binding to XPO1 motif. 2 positions are modified to phosphoserine; by host: Ser-92 and Ser-99. The tract at residues 92–116 (SGTQGVGSPQILVESPTVLESGTKE) is disordered.

Belongs to the HIV-1 REV protein family. Homomultimer; when bound to the RRE. Multimeric assembly is essential for activity and may involve XPO1. Binds to human KPNB1, XPO1, TNPO1, RANBP5 and IPO7. Interacts with the viral Integrase. Interacts with human KHDRBS1. Interacts with human NAP1; this interaction decreases Rev multimerization and stimulates its activity. Interacts with human DEAD-box helicases DDX3 and DDX24; these interactions may serve for viral RNA export to the cytoplasm and packaging, respectively. Interacts with human PSIP1; this interaction may inhibit HIV-1 DNA integration by promoting dissociation of the Integrase-LEDGF/p75 complex. Post-translationally, asymmetrically arginine dimethylated at one site by host PRMT6. Methylation impairs the RNA-binding activity and export of viral RNA from the nucleus to the cytoplasm. In terms of processing, phosphorylated by protein kinase CK2. Presence of, and maybe binding to the N-terminus of the regulatory beta subunit of CK2 is necessary for CK2-mediated Rev's phosphorylation.

It is found in the host nucleus. The protein localises to the host nucleolus. Its subcellular location is the host cytoplasm. Escorts unspliced or incompletely spliced viral pre-mRNAs (late transcripts) out of the nucleus of infected cells. These pre-mRNAs carry a recognition sequence called Rev responsive element (RRE) located in the env gene, that is not present in fully spliced viral mRNAs (early transcripts). This function is essential since most viral proteins are translated from unspliced or partially spliced pre-mRNAs which cannot exit the nucleus by the pathway used by fully processed cellular mRNAs. Rev itself is translated from a fully spliced mRNA that readily exits the nucleus. Rev's nuclear localization signal (NLS) binds directly to KPNB1/Importin beta-1 without previous binding to KPNA1/Importin alpha-1. KPNB1 binds to the GDP bound form of RAN (Ran-GDP) and targets Rev to the nucleus. In the nucleus, the conversion from Ran-GDP to Ran-GTP dissociates Rev from KPNB1 and allows Rev's binding to the RRE in viral pre-mRNAs. Rev multimerization on the RRE via cooperative assembly exposes its nuclear export signal (NES) to the surface. Rev can then form a complex with XPO1/CRM1 and Ran-GTP, leading to nuclear export of the complex. Conversion from Ran-GTP to Ran-GDP mediates dissociation of the Rev/RRE/XPO1/RAN complex, so that Rev can return to the nucleus for a subsequent round of export. Beside KPNB1, also seems to interact with TNPO1/Transportin-1, RANBP5/IPO5 and IPO7/RANBP7 for nuclear import. The nucleoporin-like HRB/RIP is an essential cofactor that probably indirectly interacts with Rev to release HIV RNAs from the perinuclear region to the cytoplasm. In Human immunodeficiency virus type 1 group M subtype B (isolate BRU/LAI) (HIV-1), this protein is Protein Rev.